A 332-amino-acid chain; its full sequence is Glycerol-3-phosphate dehydrogenase [NAD(P)+] (332 aa).

NADPH contacts are provided by tryptophan 11, arginine 30, and lysine 108. The sn-glycerol 3-phosphate site is built by lysine 108, glycine 137, and serine 139. Alanine 141 contacts NADPH. Lysine 192, aspartate 245, serine 255, arginine 256, and asparagine 257 together coordinate sn-glycerol 3-phosphate. Lysine 192 (proton acceptor) is an active-site residue. Arginine 256 lines the NADPH pocket. Valine 280 and glutamate 282 together coordinate NADPH.

Belongs to the NAD-dependent glycerol-3-phosphate dehydrogenase family.

Its subcellular location is the cytoplasm. The catalysed reaction is sn-glycerol 3-phosphate + NAD(+) = dihydroxyacetone phosphate + NADH + H(+). It carries out the reaction sn-glycerol 3-phosphate + NADP(+) = dihydroxyacetone phosphate + NADPH + H(+). Its pathway is membrane lipid metabolism; glycerophospholipid metabolism. Functionally, catalyzes the reduction of the glycolytic intermediate dihydroxyacetone phosphate (DHAP) to sn-glycerol 3-phosphate (G3P), the key precursor for phospholipid synthesis. The protein is Glycerol-3-phosphate dehydrogenase [NAD(P)+] of Burkholderia ambifaria (strain MC40-6).